The primary structure comprises 102 residues: NADH-quinone oxidoreductase subunit K (102 aa).

3 helical membrane passes run Leu-6–Val-26, Ile-30–Val-50, and Val-62–Leu-82.

It belongs to the complex I subunit 4L family. NDH-1 is composed of 13 different subunits. Subunits NuoA, H, J, K, L, M, N constitute the membrane sector of the complex.

Its subcellular location is the cell inner membrane. It catalyses the reaction a quinone + NADH + 5 H(+)(in) = a quinol + NAD(+) + 4 H(+)(out). NDH-1 shuttles electrons from NADH, via FMN and iron-sulfur (Fe-S) centers, to quinones in the respiratory chain. The immediate electron acceptor for the enzyme in this species is believed to be ubiquinone. Couples the redox reaction to proton translocation (for every two electrons transferred, four hydrogen ions are translocated across the cytoplasmic membrane), and thus conserves the redox energy in a proton gradient. In Pseudomonas putida (strain W619), this protein is NADH-quinone oxidoreductase subunit K.